We begin with the raw amino-acid sequence, 181 residues long: Adenylyl-sulfate kinase (181 aa).

An ATP-binding site is contributed by 12-19 (GLSGAGKT). The active-site Phosphoserine intermediate is S86.

Belongs to the APS kinase family.

The enzyme catalyses adenosine 5'-phosphosulfate + ATP = 3'-phosphoadenylyl sulfate + ADP + H(+). Its pathway is sulfur metabolism; hydrogen sulfide biosynthesis; sulfite from sulfate: step 2/3. Catalyzes the synthesis of activated sulfate. This Rippkaea orientalis (strain PCC 8801 / RF-1) (Cyanothece sp. (strain PCC 8801)) protein is Adenylyl-sulfate kinase.